We begin with the raw amino-acid sequence, 293 residues long: 4-hydroxy-tetrahydrodipicolinate synthase (293 aa).

Threonine 45 provides a ligand contact to pyruvate. Residue tyrosine 133 is the Proton donor/acceptor of the active site. Lysine 161 serves as the catalytic Schiff-base intermediate with substrate. Isoleucine 203 contacts pyruvate.

The protein belongs to the DapA family. Homotetramer; dimer of dimers.

The protein resides in the cytoplasm. It catalyses the reaction L-aspartate 4-semialdehyde + pyruvate = (2S,4S)-4-hydroxy-2,3,4,5-tetrahydrodipicolinate + H2O + H(+). It participates in amino-acid biosynthesis; L-lysine biosynthesis via DAP pathway; (S)-tetrahydrodipicolinate from L-aspartate: step 3/4. In terms of biological role, catalyzes the condensation of (S)-aspartate-beta-semialdehyde [(S)-ASA] and pyruvate to 4-hydroxy-tetrahydrodipicolinate (HTPA). This Shewanella piezotolerans (strain WP3 / JCM 13877) protein is 4-hydroxy-tetrahydrodipicolinate synthase.